Consider the following 313-residue polypeptide: MPTPKAFTLLGPTACGKTALALKIAETLPVEIISLDSALLYTGMDIGTAKPSASERAFVPHHLIDIITPVQTYSAARFVEDCTRLTGEITARGKCPLIVGGTMMYFRALTQGLNDLPEADACLRADLDEQKQMYGLDFLYRTLQKVDPETACRLKPNDSQRIGRALEVYYLTGRPMSAHLNGQPEHTLPFELYTAALIPEDRARLHENIALRFHLMLEQGFIGEVENLRRRYPGLTADSPAIRCVGYRQAWEHLDGATDRQTFIEKGIAATRQLAKRQLTWLRKTPLDCVADPFSDGTSGTRLIEAAKRFFGE.

11-18 (GPTACGKT) lines the ATP pocket. 13-18 (TACGKT) is a substrate binding site. 3 interaction with substrate tRNA regions span residues 36-39 (DSAL), 160-164 (QRIGR), and 243-248 (RCVGYR).

It belongs to the IPP transferase family. As to quaternary structure, monomer. Mg(2+) is required as a cofactor.

The catalysed reaction is adenosine(37) in tRNA + dimethylallyl diphosphate = N(6)-dimethylallyladenosine(37) in tRNA + diphosphate. Its function is as follows. Catalyzes the transfer of a dimethylallyl group onto the adenine at position 37 in tRNAs that read codons beginning with uridine, leading to the formation of N6-(dimethylallyl)adenosine (i(6)A). This is tRNA dimethylallyltransferase from Neisseria gonorrhoeae (strain ATCC 700825 / FA 1090).